The chain runs to 127 residues: UPF0102 protein Geob_1494 (127 aa).

The protein belongs to the UPF0102 family.

The protein is UPF0102 protein Geob_1494 of Geotalea daltonii (strain DSM 22248 / JCM 15807 / FRC-32) (Geobacter daltonii).